A 511-amino-acid chain; its full sequence is Bifunctional purine biosynthesis protein PurH (511 aa).

In terms of domain architecture, MGS-like spans 1–145; the sequence is MKRRAIISVS…KNHAYVTAVV (145 aa).

Belongs to the PurH family.

It carries out the reaction (6R)-10-formyltetrahydrofolate + 5-amino-1-(5-phospho-beta-D-ribosyl)imidazole-4-carboxamide = 5-formamido-1-(5-phospho-D-ribosyl)imidazole-4-carboxamide + (6S)-5,6,7,8-tetrahydrofolate. The catalysed reaction is IMP + H2O = 5-formamido-1-(5-phospho-D-ribosyl)imidazole-4-carboxamide. It participates in purine metabolism; IMP biosynthesis via de novo pathway; 5-formamido-1-(5-phospho-D-ribosyl)imidazole-4-carboxamide from 5-amino-1-(5-phospho-D-ribosyl)imidazole-4-carboxamide (10-formyl THF route): step 1/1. It functions in the pathway purine metabolism; IMP biosynthesis via de novo pathway; IMP from 5-formamido-1-(5-phospho-D-ribosyl)imidazole-4-carboxamide: step 1/1. This is Bifunctional purine biosynthesis protein PurH from Anoxybacillus flavithermus (strain DSM 21510 / WK1).